A 599-amino-acid chain; its full sequence is Endo-1,4-beta-xylanase B (599 aa).

The signal sequence occupies residues 1–37; the sequence is MTISASDYRHPGNFLKRTTALLCVGTALTALAFNASA. The CBM2 domain maps to 38-136; sequence ACTYTIDSEW…TVTGAACNSA (99 aa). A disulfide bridge connects residues Cys39 and Cys133. The region spanning 163-289 is the CBM6 domain; that stretch reads LLQEAQAGFC…LPNIDSLSVV (127 aa). A GH10 domain is found at 315-595; sequence SSSAASAKKF…RPAMTWLINN (281 aa). Glu431 functions as the Proton donor in the catalytic mechanism. The active-site Nucleophile is Glu530.

This sequence belongs to the glycosyl hydrolase 10 (cellulase F) family.

It carries out the reaction Endohydrolysis of (1-&gt;4)-beta-D-xylosidic linkages in xylans.. It participates in glycan metabolism; hemicellulose degradation. Functionally, xylanase B contributes to hydrolyze hemicellulose, the major component of plant cell-walls. The protein is Endo-1,4-beta-xylanase B (xynB) of Cellvibrio japonicus (strain Ueda107) (Pseudomonas fluorescens subsp. cellulosa).